A 609-amino-acid chain; its full sequence is Chaperone protein DnaK (609 aa).

At Thr172 the chain carries Phosphothreonine; by autocatalysis. The interval Gln578–Lys609 is disordered. A compositionally biased stretch (acidic residues) spans Val597–Lys609.

It belongs to the heat shock protein 70 family.

In terms of biological role, acts as a chaperone. The polypeptide is Chaperone protein DnaK (Geobacillus sp. (strain WCH70)).